An 891-amino-acid polypeptide reads, in one-letter code: Dynein axonemal intermediate chain 3 (891 aa).

Basic residues predominate over residues 1-16 (MAPKQKKKSSRRKKSP). The interval 1 to 27 (MAPKQKKKSSRRKKSPKPILAASEDME) is disordered. WD repeat units lie at residues 395–435 (ESPD…DRIE), 477–533 (GHKR…PLTP), 670–709 (IHDG…GPLL), and 713–753 (CAPK…HEPA). The stretch at 817 to 861 (HLEYVEQRKKIREQEKKEMEQEMAKKKVKIYQKSKEQMEAELKMD) forms a coiled coil.

In terms of assembly, interacts with ACTR2; this interaction reduces binding of the Arp2/3 complex to the VCA domain of nucleation promoting factors. Part of the multisubunit axonemal dynein complex formed at least of two heavy chains and a number of intermediate and light chains. Found in a associated with the catalytic heavy chain DNAH2, the intermediate chain DNAI4, and the light chain DYNLT1.

The protein resides in the cytoplasm. Its function is as follows. Acts as a negative regulator of cell migration, invasion, and metastasis downstream of p53/TP53, through inhibition of Arp2/3 complex-mediated actin polymerization. Via its association with the multisubunit axonemal dynein complex, is potentially involved in the regulation of cilia function. May play a role in osteogenesis of dental tissue-derived mesenchymal stem cells. The protein is Dynein axonemal intermediate chain 3 (DNAI3) of Macaca fascicularis (Crab-eating macaque).